The following is a 446-amino-acid chain: Cytochrome P450 monooxygenase ATR14 (446 aa).

Residues 403–446 (NFTYPDEFRPDRWLDDRDQKEYEHDHGDAMQPFSVGPRDCPSQK) form a disordered region. Residues 408 to 430 (DEFRPDRWLDDRDQKEYEHDHGD) are compositionally biased toward basic and acidic residues. Cys-442 serves as a coordination point for heme.

This sequence belongs to the cytochrome P450 family. Heme is required as a cofactor.

The protein operates within mycotoxin biosynthesis. Its function is as follows. Cytochrome P450 monooxygenase; part of the core atranone cluster (CAC) which products are predicted to catalyze most or all steps of mycotoxin atranone synthesis, starting from geranylgeranyl pyrophosphate (GGPP). The initial cyclization of GGPP to dolabellane is probably performed by the terpene cyclase ATR13. The Baeyer-Villiger oxidation near the end of the atranone synthesis, which converts atranones D and E to atranones F and G is predicted to be catalyzed by the monooxygenase ATR8. Of the CAC's other predicted gene products, the reducing PKS ATR6 might synthesize a polyketide chain. This polyketide is probably transferred onto the atranone backbone by the polyketide transferase ATR5. Other predicted CAC products include 4 oxygenases (ATR2, ATR3, ATR4, and ATR14), 3 short-chain reductases (ATR7, ATR9, and ATR10), and a methyltransferase (ATR12). These may all be involved in the various steps of atranone biosynthesis, although their specific roles must await experimental determination. The sequence is that of Cytochrome P450 monooxygenase ATR14 from Stachybotrys chlorohalonatus (strain IBT 40285).